The following is a 278-amino-acid chain: Autotransporter adhesin BtaF (278 aa).

The signal sequence occupies residues 1–29 (MKLPPVFVFELVENQGLANIALIRPRVIA). Residues 30–182 (PDNNLRPGGI…RAAIRQNSAA (153 aa)) are surface exposed passenger domain. The segment at 186–224 (LGQRVDGLQGQINSARKEARAGAANAAALSGLRYDNRPG) is outer membrane translocation of the passenger domain. The translocator domain stretch occupies residues 225–278 (KVSIATGVGGFKGSTALAAGIGYTSKNENARYNVSVAYNEAGTSWNAGASFTLN).

This sequence belongs to the autotransporter-2 (AT-2) (TC 1.B.40) family. In terms of assembly, homotrimer.

The protein resides in the cell surface. The protein localises to the cell outer membrane. Its function is as follows. Participates in bacterial attachment to several surfaces, including various extracellular matrix (ECM) components and a hydrophobic abiotic surface. Involved in adhesion to host epithelial cells and is required for full virulence in mice. Also implicated in the resistance to porcine serum. In Brucella suis biovar 1 (strain 1330), this protein is Autotransporter adhesin BtaF.